The chain runs to 417 residues: UPF0597 protein FMG_0209 (417 aa).

It belongs to the UPF0597 family.

The sequence is that of UPF0597 protein FMG_0209 from Finegoldia magna (strain ATCC 29328 / DSM 20472 / WAL 2508) (Peptostreptococcus magnus).